Here is a 158-residue protein sequence, read N- to C-terminus: uncharacterized protein (158 aa).

The next 4 membrane-spanning stretches (helical) occupy residues 12–32 (IITLIIFVAWLFVLILIAVVV), 39–59 (LDILFGWMLPLPFAVLNSLSV), 90–110 (LIYLIPVIISFVVTPSIFNTI), and 113–133 (IISTLFFPILNLVLSFVWLPL).

Its subcellular location is the cell membrane. This is an uncharacterized protein from Mycoplasma genitalium (strain ATCC 33530 / DSM 19775 / NCTC 10195 / G37) (Mycoplasmoides genitalium).